We begin with the raw amino-acid sequence, 271 residues long: Virulence regulon transcriptional activator VirF (271 aa).

In terms of domain architecture, HTH araC/xylS-type spans 167-265 (ERLQKFMEEN…GCTPSQARLT (99 aa)). DNA-binding regions (H-T-H motif) lie at residues 184 to 205 (SKFA…GTVY) and 232 to 255 (IVDI…RRRF).

Functionally, transcriptional activator of the Yersinia virulence regulon. This is Virulence regulon transcriptional activator VirF (virF) from Yersinia enterocolitica.